Here is a 230-residue protein sequence, read N- to C-terminus: Claudin-2 (230 aa).

The Cytoplasmic segment spans residues 1-7; the sequence is MASLGLQ. A helical membrane pass occupies residues 8–28; that stretch reads LVGYILGLLGLLGTLVAMLLP. The Extracellular segment spans residues 29–81; that stretch reads SWKTSSYVGASIVTAVGFSKGLWMECATHSTGITQCDIYSTLLGLPADIQAAQ. The cysteines at positions 54 and 64 are disulfide-linked. A helical membrane pass occupies residues 82 to 102; the sequence is AMMVTSSAISSLACIISVVGM. The Cytoplasmic portion of the chain corresponds to 103-116; it reads RCTVFCQESRAKDR. The helical transmembrane segment at 117 to 137 threads the bilayer; that stretch reads VAVAGGVFFILGGLLGFIPVA. Topologically, residues 138-162 are extracellular; it reads WNLHGILRDFYSPLVPDSMKFEIGE. Residues 163-183 form a helical membrane-spanning segment; that stretch reads ALYLGIISSLFSLIAGIILCF. Residues 184-230 are Cytoplasmic-facing; it reads SCSSQRNRSNYYDAYQAQPLATRSSPRPGQPPKVKSEFNSYSLTGYV. A disordered region spans residues 205-230; it reads TRSSPRPGQPPKVKSEFNSYSLTGYV. Lysine 218 participates in a covalent cross-link: Glycyl lysine isopeptide (Lys-Gly) (interchain with G-Cter in SUMO). Serine 219 and serine 223 each carry phosphoserine. The segment covering 220–230 has biased composition (polar residues); it reads EFNSYSLTGYV. Positions 229-230 are interactions with TJP1, TJP2 and TJP3; sequence YV.

It belongs to the claudin family. Can form homo- and heteropolymers with other claudins to mediate paracellular barrier and channel functions of tight junctions in response to physiological stimuli. Homopolymers interact with CLDN3, but not CLDN1, homopolymers. Directly interacts with TJP1/ZO-1, TJP2/ZO-2 and TJP3/ZO-3. In terms of processing, the disulfide bond is necessary for pore formation, but is not required for correct protein trafficking.

The protein resides in the cell junction. Its subcellular location is the tight junction. The protein localises to the cell membrane. The enzyme catalyses Na(+)(in) = Na(+)(out). It carries out the reaction K(+)(in) = K(+)(out). The catalysed reaction is Rb(+)(in) = Rb(+)(out). It catalyses the reaction Li(+)(in) = Li(+)(out). The enzyme catalyses Cs(+)(in) = Cs(+)(out). It carries out the reaction Ca(2+)(in) = Ca(2+)(out). The catalysed reaction is methylamine(out) = methylamine(in). It catalyses the reaction choline(out) = choline(in). The enzyme catalyses H2O(in) = H2O(out). Functionally, forms paracellular channels: polymerizes in tight junction strands with cation- and water-selective channels through the strands, conveying epithelial permeability in a process known as paracellular tight junction permeability. In intestinal epithelium, allows for sodium and water fluxes from the peritoneal side to the lumen of the intestine to regulate nutrient absorption and clear enteric pathogens as part of mucosal immune response. In kidney, allows passive sodium and calcium reabsorption across proximal tubules from the lumen back to the bloodstream. In the hepatobiliary tract, allows paracellular water and cation fluxes in the hepatic perivenous areas and biliary epithelium to generate bile flow and maintain osmotic gradients. The protein is Claudin-2 of Homo sapiens (Human).